Here is a 543-residue protein sequence, read N- to C-terminus: CTP synthase (543 aa).

Positions 1-265 (MARYIFITGG…DDEVLAAFGI (265 aa)) are amidoligase domain. CTP is bound at residue serine 13. Serine 13 serves as a coordination point for UTP. 14-19 (SLGKGL) is a binding site for ATP. Tyrosine 54 provides a ligand contact to L-glutamine. Aspartate 71 contacts ATP. Mg(2+)-binding residues include aspartate 71 and glutamate 139. CTP contacts are provided by residues 146-148 (DIE), 186-191 (KTKPTQ), and lysine 222. UTP is bound by residues 186–191 (KTKPTQ) and lysine 222. 238–240 (RDV) is a binding site for ATP. The 252-residue stretch at 291 to 542 (TIAIVGKYTG…IQAAMVQSRL (252 aa)) folds into the Glutamine amidotransferase type-1 domain. Position 353 (glycine 353) interacts with L-glutamine. The Nucleophile; for glutamine hydrolysis role is filled by cysteine 380. L-glutamine-binding positions include 381–384 (FGMQ), glutamate 404, and arginine 470. Active-site residues include histidine 515 and glutamate 517.

This sequence belongs to the CTP synthase family. As to quaternary structure, homotetramer.

The enzyme catalyses UTP + L-glutamine + ATP + H2O = CTP + L-glutamate + ADP + phosphate + 2 H(+). It catalyses the reaction L-glutamine + H2O = L-glutamate + NH4(+). The catalysed reaction is UTP + NH4(+) + ATP = CTP + ADP + phosphate + 2 H(+). Its pathway is pyrimidine metabolism; CTP biosynthesis via de novo pathway; CTP from UDP: step 2/2. With respect to regulation, allosterically activated by GTP, when glutamine is the substrate; GTP has no effect on the reaction when ammonia is the substrate. The allosteric effector GTP functions by stabilizing the protein conformation that binds the tetrahedral intermediate(s) formed during glutamine hydrolysis. Inhibited by the product CTP, via allosteric rather than competitive inhibition. Functionally, catalyzes the ATP-dependent amination of UTP to CTP with either L-glutamine or ammonia as the source of nitrogen. Regulates intracellular CTP levels through interactions with the four ribonucleotide triphosphates. The polypeptide is CTP synthase (Bradyrhizobium diazoefficiens (strain JCM 10833 / BCRC 13528 / IAM 13628 / NBRC 14792 / USDA 110)).